Here is a 397-residue protein sequence, read N- to C-terminus: Chorismate synthase (397 aa).

Residues arginine 40 and arginine 46 each contribute to the NADP(+) site. Residues 129–131 (RSS), 257–258 (QA), glycine 302, 317–321 (KPISS), and arginine 343 each bind FMN.

Belongs to the chorismate synthase family. As to quaternary structure, homotetramer. FMNH2 serves as cofactor.

It carries out the reaction 5-O-(1-carboxyvinyl)-3-phosphoshikimate = chorismate + phosphate. The protein operates within metabolic intermediate biosynthesis; chorismate biosynthesis; chorismate from D-erythrose 4-phosphate and phosphoenolpyruvate: step 7/7. Its function is as follows. Catalyzes the anti-1,4-elimination of the C-3 phosphate and the C-6 proR hydrogen from 5-enolpyruvylshikimate-3-phosphate (EPSP) to yield chorismate, which is the branch point compound that serves as the starting substrate for the three terminal pathways of aromatic amino acid biosynthesis. This reaction introduces a second double bond into the aromatic ring system. This Pelodictyon phaeoclathratiforme (strain DSM 5477 / BU-1) protein is Chorismate synthase.